The sequence spans 89 residues: Small ribosomal subunit protein uS15c (89 aa).

Belongs to the universal ribosomal protein uS15 family. In terms of assembly, part of the 30S ribosomal subunit.

It is found in the plastid. The sequence is that of Small ribosomal subunit protein uS15c (rps15) from Aneura mirabilis (Parasitic liverwort).